A 405-amino-acid polypeptide reads, in one-letter code: Imidazolonepropionase (405 aa).

Residues His72 and His74 each coordinate Fe(3+). Positions 72 and 74 each coordinate Zn(2+). 4-imidazolone-5-propanoate-binding residues include Arg81, Tyr144, and His177. Tyr144 lines the N-formimidoyl-L-glutamate pocket. His242 provides a ligand contact to Fe(3+). His242 contributes to the Zn(2+) binding site. Position 245 (Gln245) interacts with 4-imidazolone-5-propanoate. Fe(3+) is bound at residue Asp317. Residue Asp317 coordinates Zn(2+). N-formimidoyl-L-glutamate contacts are provided by Asn319 and Gly321. Thr322 lines the 4-imidazolone-5-propanoate pocket.

It belongs to the metallo-dependent hydrolases superfamily. HutI family. The cofactor is Zn(2+). It depends on Fe(3+) as a cofactor.

It localises to the cytoplasm. The enzyme catalyses 4-imidazolone-5-propanoate + H2O = N-formimidoyl-L-glutamate. It participates in amino-acid degradation; L-histidine degradation into L-glutamate; N-formimidoyl-L-glutamate from L-histidine: step 3/3. Catalyzes the hydrolytic cleavage of the carbon-nitrogen bond in imidazolone-5-propanoate to yield N-formimidoyl-L-glutamate. It is the third step in the universal histidine degradation pathway. The polypeptide is Imidazolonepropionase (Klebsiella pneumoniae subsp. pneumoniae (strain ATCC 700721 / MGH 78578)).